The sequence spans 353 residues: Ribosome biogenesis protein BRX1 homolog (353 aa).

Positions 1–50 are disordered; the sequence is MAATKRKRRGGLEVQAKKPKRSSKDAGQPAKQADVAKEAEEENRDRIPGP. The span at 34–47 shows a compositional bias: basic and acidic residues; that stretch reads DVAKEAEEENRDRI. The Brix domain occupies 60–249; the sequence is ERILIFSSRG…LIKIFQGSFG (190 aa). Residue lysine 160 forms a Glycyl lysine isopeptide (Lys-Gly) (interchain with G-Cter in SUMO2) linkage. A Phosphoserine modification is found at serine 261. Lysine 276 is subject to N6-acetyllysine. Glycyl lysine isopeptide (Lys-Gly) (interchain with G-Cter in SUMO2) cross-links involve residues lysine 314 and lysine 322. Residues 334 to 344 are compositionally biased toward basic residues; it reads RRIYKRHRKLQ. The disordered stretch occupies residues 334–353; the sequence is RRIYKRHRKLQQKMSRGSAK.

Belongs to the BRX1 family.

Its subcellular location is the nucleus. It localises to the nucleolus. In terms of biological role, required for biogenesis of the 60S ribosomal subunit. This is Ribosome biogenesis protein BRX1 homolog (Brix1) from Mus musculus (Mouse).